We begin with the raw amino-acid sequence, 1429 residues long: Protein lin-12 (1429 aa).

An N-terminal signal peptide occupies residues 1–15 (MRIPTICFLFLLISL). The Extracellular segment spans residues 16 to 908 (SKSLHIGSCL…GNNTGFLSWN (893 aa)). EGF-like domains are found at residues 20–61 (HIGS…EYCE) and 114–150 (TQGW…ERCE). 9 cysteine pairs are disulfide-bonded: C24–C35, C29–C49, C51–C60, C118–C129, C123–C138, C140–C149, C156–C169, C163–C178, and C180–C189. N-linked (GlcNAc...) asparagine glycosylation occurs at N41. The EGF-like 3; calcium-binding domain maps to 152-190 (DVNECEENKNACGNRSTCMNTLGTYICVCPQGFLPPDCL). A glycan (N-linked (GlcNAc...) asparagine) is linked at N165. N194 is a glycosylation site (N-linked (GlcNAc...) asparagine). EGF-like domains follow at residues 201-246 (KQPV…STCE), 250-285 (KEDS…SYCQ), 287-323 (GKDN…PYCE), and 323-363 (EKMD…ILCE). 30 disulfide bridges follow: C205-C227, C221-C234, C236-C245, C254-C264, C259-C273, C275-C284, C291-C302, C296-C311, C313-C322, C327-C339, C334-C351, C353-C362, C369-C381, C375-C390, C392-C401, C408-C419, C413-C429, C431-C440, C462-C475, C469-C480, C482-C491, C507-C518, C512-C529, C531-C540, C547-C558, C552-C567, C569-C578, C586-C597, C591-C607, and C609-C618. Residues 365-402 (DKNECLSENMCLNNGTCVNLPGSFRCDCARGFGGKWCD) form the EGF-like 8; calcium-binding domain. An N-linked (GlcNAc...) asparagine glycan is attached at N378. EGF-like domains lie at 404–441 (PLNM…KRCE), 449–492 (GGVR…NQCE), 503–541 (SENL…DICE), 543–579 (HKDL…NGCE), and 582–619 (KMFR…ARCE). N515 carries an N-linked (GlcNAc...) asparagine glycan. An N-linked (GlcNAc...) asparagine glycan is attached at N623. 9 disulfide bridges follow: C638–C661, C643–C656, C652–C668, C678–C702, C684–C697, C693–C709, C716–C742, C724–C737, and C733–C749. LNR repeat units follow at residues 638–674 (CEKR…KREP), 678–709 (CRYG…GMDC), and 716–754 (CPVK…NETN). Residues N751, N754, and N900 are each glycosylated (N-linked (GlcNAc...) asparagine). Residues 909–931 (ALLLIGAGCLIVMVVLMLGALPG) traverse the membrane as a helical segment. Residues 932–1429 (NRTRKRRMIN…TRYSEPAHYF (498 aa)) are Cytoplasmic-facing. The tract at residues 933 to 952 (RTRKRRMINASVWMPPMENE) is RAM domain. ANK repeat units lie at residues 1093–1122 (DENT…DPTI), 1126–1158 (SERS…DIEE), 1162–1194 (NGMT…KVDY), 1206–1236 (KGRT…NKDK), and 1240–1269 (DGKT…SVEA). Residues 1308-1374 (IQHTHQPQPS…TTHTTPTSLN (67 aa)) are disordered. The segment covering 1319–1330 (KVTRAPKKQTSR) has biased composition (basic residues). Positions 1361 to 1374 (HFMNTTHTTPTSLN) are enriched in polar residues.

Belongs to the NOTCH family. As to quaternary structure, may interact with dsl-1. May interact with lag-2. May interact with osm-11. Interacts with sel-10. When activated, the lin-12/Notch intracellular domain (NICD) can become a component of a complex consisting of at least the NICD, lag-1 and sel-8/lag-3. The NICD probably facilitates ordered assembly of the ternary complex via allosteric interactions of its RBP-j associated molecule (RAM) domain with lag-1. In terms of processing, upon binding its ligands, it is cleaved (S2 cleavage) in its extracellular domain, close to the transmembrane domain. S2 cleavage is probably mediated by the metalloproteases adm-4 and sup-17. It is then cleaved (S3 cleavage) downstream of its transmembrane domain, releasing it from the cell membrane; S3 cleavage requires a multiprotein gamma-secretase complex, which may include presenilin sel-12.

The protein localises to the apical cell membrane. Its subcellular location is the nucleus. Its function is as follows. Essential signaling protein which has a major role in many developmental processes; involved in cell fate decisions that require cell-cell interactions. Probable membrane-bound receptor for putative ligands lag-2, apx-1, dsl-1 and osm-11. Upon ligand activation, and releasing from the cell membrane, the lin-12/Notch intracellular domain (NICD) forms a transcriptional activator complex with lag-1 and lag-3 and regulates expression of various genes. Required for ventral cell fates in the postembryonic mesodermal lineage (M lineage) and in uterine precursor cells. Activity in cell fate decisions and tumorigenesis is negatively regulated by sel-10. Best known for involvement in cell-fate decisions during development, but also plays roles in other events. Regulates recovery from the dauer larval state. Modulates chemosensory avoidance of octanol and quiescence during molting. Promotes basement membrane mobility during tissue remodeling. Involved in establishing left-right asymmetry during intestinal organogenesis. This chain is Protein lin-12, found in Caenorhabditis elegans.